Here is a 360-residue protein sequence, read N- to C-terminus: Peptide chain release factor 1 (360 aa).

Position 235 is an N5-methylglutamine (Q235). Residues 285 to 313 (KRQQAEASTRRNLLGSGDRSDRNRTYNFP) are disordered.

It belongs to the prokaryotic/mitochondrial release factor family. Methylated by PrmC. Methylation increases the termination efficiency of RF1.

The protein localises to the cytoplasm. Peptide chain release factor 1 directs the termination of translation in response to the peptide chain termination codons UAG and UAA. The protein is Peptide chain release factor 1 of Shigella boydii serotype 18 (strain CDC 3083-94 / BS512).